A 2290-amino-acid polypeptide reads, in one-letter code: Protein Ycf2 (2290 aa).

Residue Gly1644–Ser1651 coordinates ATP.

The protein belongs to the Ycf2 family.

The protein resides in the plastid. The protein localises to the chloroplast stroma. Functionally, probable ATPase of unknown function. Its presence in a non-photosynthetic plant (Epifagus virginiana) and experiments in tobacco indicate that it has an essential function which is probably not related to photosynthesis. This chain is Protein Ycf2, found in Barbarea verna (Land cress).